We begin with the raw amino-acid sequence, 358 residues long: Protein-arginine kinase (358 aa).

A Phosphagen kinase C-terminal domain is found at valine 23–alanine 250. Residues valine 26–serine 30, lysine 174–phenylalanine 178, and serine 203–glycine 208 each bind ATP.

It belongs to the ATP:guanido phosphotransferase family.

It carries out the reaction L-arginyl-[protein] + ATP = N(omega)-phospho-L-arginyl-[protein] + ADP + H(+). Its function is as follows. Catalyzes the specific phosphorylation of arginine residues in proteins. This Chlamydia pneumoniae (Chlamydophila pneumoniae) protein is Protein-arginine kinase.